The primary structure comprises 416 residues: Serine/threonine-protein kinase 26 (416 aa).

Ala-2 is modified (N-acetylalanine). At Ser-4 the chain carries Phosphoserine. One can recognise a Protein kinase domain in the interval 24–274 (FTKLERIGKG…AKELLKHKFI (251 aa)). ATP contacts are provided by residues 30-38 (IGKGSFGEV) and Lys-53. Asp-144 serves as the catalytic Proton acceptor. Position 178 is a phosphothreonine; by autocatalysis (Thr-178). The segment at 296–343 (AEGHSDEESDSEGSDSESSSRESNPHPEWSFTTVRKKPDPKKLQNGEE) is disordered. Phosphoserine occurs at positions 300, 304, 306, 309, and 325. Residues Thr-327 and Thr-328 each carry the phosphothreonine modification. Positions 331–340 (KKPDPKKLQN) are enriched in basic and acidic residues.

This sequence belongs to the protein kinase superfamily. STE Ser/Thr protein kinase family. STE20 subfamily. In terms of assembly, homodimer. Interacts with PDCD10. Interacts with GOLGA2. Interacts with CTTNBP2NL. Interacts with RIPOR1 (via C-terminus); this interaction occurs in a PDCD10-dependent and Rho-independent manner. Interacts with PDCD10; this interaction is required for the association of STK26 with RIPOR1. Part of the core of STRIPAK complexes composed of PP2A catalytic and scaffolding subunits, the striatins (PP2A regulatory subunits), the striatin-associated proteins MOB4, STRIP1 and STRIP2, PDCD10 and members of the STE20 kinases, such as STK24 and STK26. Requires Mg(2+) as cofactor.

Its subcellular location is the cytoplasm. The protein resides in the golgi apparatus. It catalyses the reaction L-seryl-[protein] + ATP = O-phospho-L-seryl-[protein] + ADP + H(+). The catalysed reaction is L-threonyl-[protein] + ATP = O-phospho-L-threonyl-[protein] + ADP + H(+). Its activity is regulated as follows. Interaction with Golgi matrix protein GOLGA2 leads to autophosphorylation on Thr-178, possibly as a consequence of stabilization of dimer formation. May also be activated by C-terminal cleavage. Functionally, serine/threonine-protein kinase that acts as a mediator of cell growth. Modulates apoptosis. In association with STK24 negatively regulates Golgi reorientation in polarized cell migration upon RHO activation. Phosphorylates ATG4B at 'Ser-383', thereby increasing autophagic flux. Part of the striatin-interacting phosphatase and kinase (STRIPAK) complexes. STRIPAK complexes have critical roles in protein (de)phosphorylation and are regulators of multiple signaling pathways including Hippo, MAPK, nuclear receptor and cytoskeleton remodeling. Different types of STRIPAK complexes are involved in a variety of biological processes such as cell growth, differentiation, apoptosis, metabolism and immune regulation. This is Serine/threonine-protein kinase 26 from Mus musculus (Mouse).